A 92-amino-acid polypeptide reads, in one-letter code: Putative protein pog (92 aa).

The chain is Putative protein pog from Acute bee paralysis virus (strain Rothamsted) (ABPV).